The primary structure comprises 177 residues: MNGGHIQLIIGPMFSGKSTELIRRVRRYQIAQYKCVTIKYSNDNRYGTGLWTHDKNNFEALEATKLCDVLEAITDFSVIGIDEGQFFPDIVEFCERMANEGKIVIVAALDGTFQRKPFNNILDLIPLSEMVVKLTAVCMKCFKEASFSKRLGTETKIEIIGGIDMYQSVCRKCYIDS.

Residue 11 to 18 (GPMFSGKS) participates in ATP binding. Catalysis depends on Glu83, which acts as the Proton acceptor. Position 113 (Phe113) interacts with substrate. Positions 138 and 141 each coordinate Zn(2+). 157–161 (IEIIG) contacts substrate. Zn(2+) contacts are provided by Cys170 and Cys173.

It belongs to the thymidine kinase family. Homotetramer. Two molecules of substrate bind to each enzyme tetramer.

It carries out the reaction thymidine + ATP = dTMP + ADP + H(+). Functionally, phosphorylates thymidine and thymidine analogs, such as azidothymidine (AZT). Part of the salvage pathway for pyrimidine deoxyribonucleotide synthesis. The protein is Thymidine kinase (OPG101) of Variola virus (isolate Human/India/Ind3/1967) (VARV).